The following is a 930-amino-acid chain: Protein translocase subunit SecA (930 aa).

ATP is bound by residues Q87, 105-109, and D515; that span reads GEGKT. Residues C914, C916, C925, and H926 each coordinate Zn(2+).

Belongs to the SecA family. Monomer and homodimer. Part of the essential Sec protein translocation apparatus which comprises SecA, SecYEG and auxiliary proteins SecDF-YajC and YidC. It depends on Zn(2+) as a cofactor.

Its subcellular location is the cell inner membrane. The protein resides in the cytoplasm. It catalyses the reaction ATP + H2O + cellular proteinSide 1 = ADP + phosphate + cellular proteinSide 2.. Part of the Sec protein translocase complex. Interacts with the SecYEG preprotein conducting channel. Has a central role in coupling the hydrolysis of ATP to the transfer of proteins into and across the cell membrane, serving both as a receptor for the preprotein-SecB complex and as an ATP-driven molecular motor driving the stepwise translocation of polypeptide chains across the membrane. The polypeptide is Protein translocase subunit SecA (Cupriavidus metallidurans (strain ATCC 43123 / DSM 2839 / NBRC 102507 / CH34) (Ralstonia metallidurans)).